The following is a 1558-amino-acid chain: Eukaryotic translation initiation factor 2-alpha kinase 1 (1558 aa).

The region spanning 429-789 (FFEEKILGCG…AYNLLHESVL (361 aa)) is the Protein kinase domain. Residues 435-443 (LGCGGFGYV) and K458 contribute to the ATP site. The active-site Proton acceptor is D660. The segment at 1014-1033 (GTSTNNNNNNNNNNMGNNNI) is disordered.

This sequence belongs to the protein kinase superfamily. Ser/Thr protein kinase family. GCN2 subfamily. In terms of processing, auto-phosphorylated.

It catalyses the reaction L-seryl-[protein] + ATP = O-phospho-L-seryl-[protein] + ADP + H(+). The catalysed reaction is L-threonyl-[protein] + ATP = O-phospho-L-threonyl-[protein] + ADP + H(+). Functionally, in blood stage parasites, phosphorylates translation factor eIF2alpha in response to amino acid starvation. During the asexual blood stage, involved in the response to the host hormone melatonin which is used by the parasite to modulate its cell cycle. The protein is Eukaryotic translation initiation factor 2-alpha kinase 1 of Plasmodium falciparum (isolate 3D7).